The following is a 567-amino-acid chain: Zinc finger protein 512 (567 aa).

The interval 1–32 (MSSRLGAVPATSGPTTFKQQRSTRIVGAKNSR) is disordered. Over residues 12 to 23 (SGPTTFKQQRST) the composition is skewed to polar residues. Residues K18 and K84 each participate in a glycyl lysine isopeptide (Lys-Gly) (interchain with G-Cter in SUMO2) cross-link. The disordered stretch occupies residues 86-148 (AATSHVEGSG…QARRIRKEPP (63 aa)). A compositionally biased stretch (basic residues) spans 119-130 (KKHKLYGRKQRP). The C2H2-type 1 zinc finger occupies 197 to 220 (FTCHHCGKQLRSLAGMKYHVMANH). K227 is covalently cross-linked (Glycyl lysine isopeptide (Lys-Gly) (interchain with G-Cter in SUMO2)). The C2H2-type 2 zinc finger occupies 287–310 (LKCHHCGKPYRSKAGLAYHLRSEH). K333 is covalently cross-linked (Glycyl lysine isopeptide (Lys-Gly) (interchain with G-Cter in SUMO2)). The C2H2-type 3; atypical zinc finger occupies 406 to 430 (IQCPNQGCEAVYSSVSGLKAHLGSC). The C2H2-type 4 zinc-finger motif lies at 440–463 (YKCLLCQKEFVSESGVKYHINSVH). Residues 486-567 (QRQQEEEKRR…PKTNHKRGRK (82 aa)) are disordered. Over residues 495-508 (RQQHRSRRSLRRRQ) the composition is skewed to basic residues. Positions 523–532 (VGKDQRRNNE) are enriched in basic and acidic residues. A compositionally biased stretch (basic residues) spans 556-567 (KPPKTNHKRGRK).

The protein belongs to the krueppel C2H2-type zinc-finger protein family.

The protein localises to the nucleus. In terms of biological role, may be involved in transcriptional regulation. This Pongo abelii (Sumatran orangutan) protein is Zinc finger protein 512 (ZNF512).